A 266-amino-acid polypeptide reads, in one-letter code: Norfluorocurarine synthase 1 (266 aa).

In terms of domain architecture, AB hydrolase-1 spans 11–121 (HFVLVHGAGH…VMPDAVNPPS (111 aa)). Catalysis depends on residues serine 86, aspartate 216, and histidine 244.

This sequence belongs to the AB hydrolase superfamily. Homodimer.

The enzyme catalyses 17-dehydropreakuammicine + H2O = norfluorocurarine + methanol + CO2. It participates in alkaloid biosynthesis. Functionally, hydrolase involved in the biosynthesis of curare monoterpene indole alkaloids (MIAs), natural products such as diaboline, a pharmacologically active compound used to regulate blood pressure. Curare alkaloids act as animal glycine receptor antagonists. Catalyzes the conversion of dehydropreakuammicine to norfluorocurarine. This Strychnos sp protein is Norfluorocurarine synthase 1.